Reading from the N-terminus, the 242-residue chain is Orotidine 5'-phosphate decarboxylase (242 aa).

Substrate is bound by residues aspartate 21, lysine 43, 71–80 (DLKFFDVPET), threonine 124, arginine 185, glutamine 195, glycine 215, and arginine 216. Lysine 73 (proton donor) is an active-site residue.

This sequence belongs to the OMP decarboxylase family. Type 1 subfamily. As to quaternary structure, homodimer.

It catalyses the reaction orotidine 5'-phosphate + H(+) = UMP + CO2. It participates in pyrimidine metabolism; UMP biosynthesis via de novo pathway; UMP from orotate: step 2/2. Functionally, catalyzes the decarboxylation of orotidine 5'-monophosphate (OMP) to uridine 5'-monophosphate (UMP). This is Orotidine 5'-phosphate decarboxylase from Methylococcus capsulatus (strain ATCC 33009 / NCIMB 11132 / Bath).